The primary structure comprises 106 residues: Phosphoribosyl-ATP pyrophosphatase 1 (106 aa).

It belongs to the PRA-PH family.

It is found in the cytoplasm. It carries out the reaction 1-(5-phospho-beta-D-ribosyl)-ATP + H2O = 1-(5-phospho-beta-D-ribosyl)-5'-AMP + diphosphate + H(+). It functions in the pathway amino-acid biosynthesis; L-histidine biosynthesis; L-histidine from 5-phospho-alpha-D-ribose 1-diphosphate: step 2/9. The chain is Phosphoribosyl-ATP pyrophosphatase 1 (hisE1) from Bradyrhizobium diazoefficiens (strain JCM 10833 / BCRC 13528 / IAM 13628 / NBRC 14792 / USDA 110).